The following is a 988-amino-acid chain: MVPFWTVVTDQHIKYTSHNKAGFIIDEEQHHWPPSSGSSLGRAPSIPLSSSNPRSPIRPSTPSRVSTDWTRPPAPSVAYEARDINGSPRLEPHHHNMEEVLEGLCHRAALFGQGGCGRNDNPNARAGVGKRCLCRSLLDNAGQRPKGKLEIGTFVHDCLDLYGRWCHYQSEVESLWPSAGRKTRYARPSRSTNDQEGGYVDQWRADSRMYIPTILHSFLPRRDEREFTHMRYTAVTCDPDDFVVKGYKLRQNIGPTMRETELFICVTMYNEDEIEFTRTMHGIMRNIAHFCSRTRSRTWGKDGWQKIVVCVIADGRQKVHPRTLNALAAMGVYQDGIAKNVVNQKEVTAHVYEYTTQVSLDETLKFKGAEKGIVPCQMIFCLKEKNKKKLNSHRWFFNAFGRALIPNVCILLDVGTKPDSKALYHLWKAFDQNSNVAGAAGEIKADKGKGWLGLLNPLVASQNFEYKISNILDKPLESVFGYITVLPGALSAYRYHALQNDPSGHGPLSQYFKGETLHGRDADVFTANMYLAEDRILCWELVAKRDEQWVLKFVKSAYGETDVPDTVPEFISQRRRWLNGAFFAAVYALVHFKQIWRTDHSLTRKILLHIEFIYQFISLLFTFFSLANFYLTFYFVAGSLADPTIDPFGHNIGKYIFVILRYVCVLLICLQFILSLGNRPQGEEIVSEYHGDVFHHHGIHDLCLRVYCHQATYDARSRKDRPQQSYKLGNNIFTNLIVSSVSTIGLFFLMSFLYLDPWHMFTSSAQYFALLPSYICTLQVYAFCNTHDVTWGTKGDNVMHTDLGAAKAIGSGNTVEVEMPSEQLDIDSAYDVALRNLRDRVEVPKPPVSENQLQEDYYKSVRTYVVASYMVCNAILAMAVSEAYPVGSHIGSNFYLTFILWSVAALALFRAIGSSAFGVINIVSAIAEGRIQAKFERIFGGGDERGRHRAGLGSGFSESGKTGITSGSGMSGMSLSDVTSKISEKLAG.

Residues 29–75 (QHHWPPSSGSSLGRAPSIPLSSSNPRSPIRPSTPSRVSTDWTRPPAP) are disordered. Over residues 44 to 66 (PSIPLSSSNPRSPIRPSTPSRVS) the composition is skewed to low complexity. A run of 7 helical transmembrane segments spans residues 577–596 (WLNGAFFAAVYALVHFKQIW), 616–636 (FISLLFTFFSLANFYLTFYFV), 656–676 (IFVILRYVCVLLICLQFILSL), 732–752 (IFTNLIVSSVSTIGLFFLMSF), 764–784 (SAQYFALLPSYICTLQVYAFC), 864–884 (YVVASYMVCNAILAMAVSEAY), and 911–931 (AIGSSAFGVINIVSAIAEGRI). The disordered stretch occupies residues 950 to 988 (AGLGSGFSESGKTGITSGSGMSGMSLSDVTSKISEKLAG). The span at 957–976 (SESGKTGITSGSGMSGMSLS) shows a compositional bias: low complexity.

The protein belongs to the chitin synthase family. Class II subfamily.

It is found in the cell membrane. The enzyme catalyses [(1-&gt;4)-N-acetyl-beta-D-glucosaminyl](n) + UDP-N-acetyl-alpha-D-glucosamine = [(1-&gt;4)-N-acetyl-beta-D-glucosaminyl](n+1) + UDP + H(+). Its function is as follows. Polymerizes chitin, a structural polymer of the cell wall and septum, by transferring the sugar moiety of UDP-GlcNAc to the non-reducing end of the growing chitin polymer. CHS1 mainly responsible for normal yeast cell reproductive growth. In Exophiala dermatitidis (Black yeast-like fungus), this protein is Chitin synthase 1.